Here is a 338-residue protein sequence, read N- to C-terminus: Protein RecA (338 aa).

Residue 66–73 (GPESSGKT) coordinates ATP.

It belongs to the RecA family.

It is found in the cytoplasm. Its function is as follows. Can catalyze the hydrolysis of ATP in the presence of single-stranded DNA, the ATP-dependent uptake of single-stranded DNA by duplex DNA, and the ATP-dependent hybridization of homologous single-stranded DNAs. It interacts with LexA causing its activation and leading to its autocatalytic cleavage. In Geobacter sulfurreducens (strain ATCC 51573 / DSM 12127 / PCA), this protein is Protein RecA.